The sequence spans 138 residues: Transcription antitermination protein NusB (138 aa).

It belongs to the NusB family.

Involved in transcription antitermination. Required for transcription of ribosomal RNA (rRNA) genes. Binds specifically to the boxA antiterminator sequence of the ribosomal RNA (rrn) operons. This Leptospira borgpetersenii serovar Hardjo-bovis (strain JB197) protein is Transcription antitermination protein NusB.